The chain runs to 526 residues: GMP synthase [glutamine-hydrolyzing] (526 aa).

The region spanning 13–204 is the Glutamine amidotransferase type-1 domain; sequence TVLVVDFGAQ…LYRGAGLSPD (192 aa). The Nucleophile role is filled by Cys90. Active-site residues include His178 and Glu180. Residues 205–400 form the GMPS ATP-PPase domain; that stretch reads WTTGNVIEEQ…LGLPDEIVQR (196 aa). 232 to 238 contacts ATP; sequence SGGVDSA.

Homodimer.

The catalysed reaction is XMP + L-glutamine + ATP + H2O = GMP + L-glutamate + AMP + diphosphate + 2 H(+). It participates in purine metabolism; GMP biosynthesis; GMP from XMP (L-Gln route): step 1/1. Its function is as follows. Catalyzes the synthesis of GMP from XMP. The chain is GMP synthase [glutamine-hydrolyzing] (guaA) from Streptomyces coelicolor (strain ATCC BAA-471 / A3(2) / M145).